The chain runs to 392 residues: Sulfate adenylyltransferase (392 aa).

It belongs to the sulfate adenylyltransferase family.

It catalyses the reaction sulfate + ATP + H(+) = adenosine 5'-phosphosulfate + diphosphate. It functions in the pathway sulfur metabolism; hydrogen sulfide biosynthesis; sulfite from sulfate: step 1/3. This is Sulfate adenylyltransferase from Nostoc punctiforme (strain ATCC 29133 / PCC 73102).